Consider the following 121-residue polypeptide: Small ribosomal subunit protein uS13 (121 aa).

A disordered region spans residues 91–121 (HKRGLPVRGQRTRTNARTRKGPRRAAASLKK).

It belongs to the universal ribosomal protein uS13 family. Part of the 30S ribosomal subunit. Forms a loose heterodimer with protein S19. Forms two bridges to the 50S subunit in the 70S ribosome.

Located at the top of the head of the 30S subunit, it contacts several helices of the 16S rRNA. In the 70S ribosome it contacts the 23S rRNA (bridge B1a) and protein L5 of the 50S subunit (bridge B1b), connecting the 2 subunits; these bridges are implicated in subunit movement. Contacts the tRNAs in the A and P-sites. In Bordetella avium (strain 197N), this protein is Small ribosomal subunit protein uS13.